A 544-amino-acid polypeptide reads, in one-letter code: Chaperonin GroEL (544 aa).

ATP contacts are provided by residues 30-33 (TLGP), Lys-51, 87-91 (DGTTT), Gly-415, and Asp-495.

It belongs to the chaperonin (HSP60) family. In terms of assembly, forms a cylinder of 14 subunits composed of two heptameric rings stacked back-to-back. Interacts with the co-chaperonin GroES.

It localises to the cytoplasm. It carries out the reaction ATP + H2O + a folded polypeptide = ADP + phosphate + an unfolded polypeptide.. Functionally, together with its co-chaperonin GroES, plays an essential role in assisting protein folding. The GroEL-GroES system forms a nano-cage that allows encapsulation of the non-native substrate proteins and provides a physical environment optimized to promote and accelerate protein folding. This is Chaperonin GroEL from Neisseria meningitidis serogroup A / serotype 4A (strain DSM 15465 / Z2491).